Consider the following 211-residue polypeptide: Holliday junction resolvase RecU (211 aa).

Mg(2+) contacts are provided by threonine 95, aspartate 97, glutamate 110, and glutamine 129.

This sequence belongs to the RecU family. Mg(2+) is required as a cofactor.

It localises to the cytoplasm. It carries out the reaction Endonucleolytic cleavage at a junction such as a reciprocal single-stranded crossover between two homologous DNA duplexes (Holliday junction).. Functionally, endonuclease that resolves Holliday junction intermediates in genetic recombination. Cleaves mobile four-strand junctions by introducing symmetrical nicks in paired strands. Promotes annealing of linear ssDNA with homologous dsDNA. Required for DNA repair, homologous recombination and chromosome segregation. The polypeptide is Holliday junction resolvase RecU (Lactobacillus acidophilus (strain ATCC 700396 / NCK56 / N2 / NCFM)).